Here is a 72-residue protein sequence, read N- to C-terminus: Probable neurotoxin pcD-996 (72 aa).

The signal sequence occupies residues 1-19; that stretch reads MNYLVMISFALLLVIGVES. Residues 21-72 enclose the LCN-type CS-alpha/beta domain; sequence RDGYFVEPDNCLVYCMPSPEICDRGCKRYGATSGFCKEFSKGENFCWCKGLR. Disulfide bonds link Cys35/Cys56, Cys42/Cys66, and Cys46/Cys68. Residue Arg72 is a propeptide, removed by a carboxypeptidase.

The protein belongs to the long (3 C-C) scorpion toxin superfamily. As to expression, expressed by the venom gland.

It localises to the secreted. The polypeptide is Probable neurotoxin pcD-996 (Androctonus australis (Sahara scorpion)).